A 426-amino-acid polypeptide reads, in one-letter code: Putative glutamate--cysteine ligase 2 (426 aa).

The protein belongs to the glutamate--cysteine ligase type 2 family. YbdK subfamily.

The catalysed reaction is L-cysteine + L-glutamate + ATP = gamma-L-glutamyl-L-cysteine + ADP + phosphate + H(+). In terms of biological role, ATP-dependent carboxylate-amine ligase which exhibits weak glutamate--cysteine ligase activity. The sequence is that of Putative glutamate--cysteine ligase 2 from Bradyrhizobium diazoefficiens (strain JCM 10833 / BCRC 13528 / IAM 13628 / NBRC 14792 / USDA 110).